The primary structure comprises 120 residues: Large ribosomal subunit protein bL21 (120 aa).

Belongs to the bacterial ribosomal protein bL21 family. As to quaternary structure, part of the 50S ribosomal subunit. Contacts protein L20.

In terms of biological role, this protein binds to 23S rRNA in the presence of protein L20. The protein is Large ribosomal subunit protein bL21 of Roseiflexus castenholzii (strain DSM 13941 / HLO8).